A 665-amino-acid chain; its full sequence is F-box/WD repeat-containing protein lin-23 (665 aa).

Residues 81 to 127 (RDFISNLPAHLVELILFNVNSDSLKSCEEVSTSWRCALARGQHWKKL) form the F-box domain. WD repeat units lie at residues 220–257 (ENSK…CSRI), 260–299 (GHTG…KTLI), 301–337 (HCEA…DITI), 343–380 (GHRA…FVRT), 383–420 (GHRR…CLRV), 423–460 (GHEE…DPRA), and 472–509 (QHTG…PSGL). The tract at residues 574–665 (AAAEAARGAG…VDEEMPDGGP (92 aa)) is disordered. 2 stretches are compositionally biased toward acidic residues: residues 584–595 (DNDESSSEEDLD) and 655–665 (DVDEEMPDGGP).

Part of a SCF (SKP1-cullin-F-box) protein ligase complex.

It localises to the cytoplasm. In terms of biological role, functions cell autonomously to negatively regulate cell cycle progression. Required to restrain cell proliferation in response to developmental cues. Probably recognizes and binds to some proteins and promotes their ubiquitination and degradation. The sequence is that of F-box/WD repeat-containing protein lin-23 (lin-23) from Caenorhabditis elegans.